A 427-amino-acid polypeptide reads, in one-letter code: Glutamate-1-semialdehyde 2,1-aminomutase (427 aa).

Residue Lys268 is modified to N6-(pyridoxal phosphate)lysine.

It belongs to the class-III pyridoxal-phosphate-dependent aminotransferase family. HemL subfamily. The cofactor is pyridoxal 5'-phosphate.

The protein resides in the cytoplasm. The enzyme catalyses (S)-4-amino-5-oxopentanoate = 5-aminolevulinate. It functions in the pathway porphyrin-containing compound metabolism; protoporphyrin-IX biosynthesis; 5-aminolevulinate from L-glutamyl-tRNA(Glu): step 2/2. This Methanococcus maripaludis (strain C6 / ATCC BAA-1332) protein is Glutamate-1-semialdehyde 2,1-aminomutase.